The sequence spans 228 residues: MNLRKLRLLFVMCIGLTLILTAVPAHARTITNNEMGNHSGYDYELWKDYGNTSMTLNNGGAFSAGWNNIGNALFRKGKKFDSTRTHHQLGNISINYNASFNPGGNSYLCVYGWTQSPLAEYYIVDSWGTYRPTGAYKGSFYADGGTYDIYETTRVNQPSIIGIATFKQYWSVRQTKRTSGTVSVSAHFRKWESLGMPMGKMYETAFTVEGYQSSGSANVMTNQLFIGN.

The N-terminal stretch at M1–A27 is a signal peptide. In terms of domain architecture, GH11 spans T29–N222. E120 acts as the Nucleophile in catalysis. E209 functions as the Proton donor in the catalytic mechanism.

The protein belongs to the glycosyl hydrolase 11 (cellulase G) family.

The catalysed reaction is Endohydrolysis of (1-&gt;4)-beta-D-xylosidic linkages in xylans.. It functions in the pathway glycan degradation; xylan degradation. In Bacillus pumilus (Bacillus mesentericus), this protein is Endo-1,4-beta-xylanase A (xynA).